The sequence spans 231 residues: dTTP/UTP pyrophosphatase (231 aa).

Asp81 serves as the catalytic Proton acceptor.

The protein belongs to the Maf family. YhdE subfamily. Requires a divalent metal cation as cofactor.

It localises to the cytoplasm. The enzyme catalyses dTTP + H2O = dTMP + diphosphate + H(+). The catalysed reaction is UTP + H2O = UMP + diphosphate + H(+). Nucleoside triphosphate pyrophosphatase that hydrolyzes dTTP and UTP. May have a dual role in cell division arrest and in preventing the incorporation of modified nucleotides into cellular nucleic acids. This is dTTP/UTP pyrophosphatase from Lawsonia intracellularis (strain PHE/MN1-00).